A 678-amino-acid chain; its full sequence is DNA ligase (678 aa).

NAD(+)-binding positions include 47 to 51 (DSDYD), 96 to 97 (SL), and glutamate 122. Lysine 124 acts as the N6-AMP-lysine intermediate in catalysis. NAD(+) is bound by residues arginine 145, glutamate 182, lysine 300, and lysine 324. Positions 418, 421, 436, and 442 each coordinate Zn(2+). Residues 602–678 (AYNESFTGKT…ILEDNLKDLL (77 aa)) form the BRCT domain.

The protein belongs to the NAD-dependent DNA ligase family. LigA subfamily. The cofactor is Mg(2+). Mn(2+) is required as a cofactor.

The enzyme catalyses NAD(+) + (deoxyribonucleotide)n-3'-hydroxyl + 5'-phospho-(deoxyribonucleotide)m = (deoxyribonucleotide)n+m + AMP + beta-nicotinamide D-nucleotide.. Functionally, DNA ligase that catalyzes the formation of phosphodiester linkages between 5'-phosphoryl and 3'-hydroxyl groups in double-stranded DNA using NAD as a coenzyme and as the energy source for the reaction. It is essential for DNA replication and repair of damaged DNA. The protein is DNA ligase of Francisella tularensis subsp. holarctica (strain FTNF002-00 / FTA).